A 395-amino-acid chain; its full sequence is Succinyl-diaminopimelate desuccinylase (395 aa).

Residue His74 participates in Zn(2+) binding. Residue Asp76 is part of the active site. Asp107 contacts Zn(2+). Glu141 functions as the Proton acceptor in the catalytic mechanism. 3 residues coordinate Zn(2+): Glu142, Glu170, and His368.

It belongs to the peptidase M20A family. DapE subfamily. As to quaternary structure, homodimer. Requires Zn(2+) as cofactor. Co(2+) is required as a cofactor.

It carries out the reaction N-succinyl-(2S,6S)-2,6-diaminopimelate + H2O = (2S,6S)-2,6-diaminopimelate + succinate. It participates in amino-acid biosynthesis; L-lysine biosynthesis via DAP pathway; LL-2,6-diaminopimelate from (S)-tetrahydrodipicolinate (succinylase route): step 3/3. Catalyzes the hydrolysis of N-succinyl-L,L-diaminopimelic acid (SDAP), forming succinate and LL-2,6-diaminopimelate (DAP), an intermediate involved in the bacterial biosynthesis of lysine and meso-diaminopimelic acid, an essential component of bacterial cell walls. This Brucella melitensis biotype 1 (strain ATCC 23456 / CCUG 17765 / NCTC 10094 / 16M) protein is Succinyl-diaminopimelate desuccinylase.